Consider the following 257-residue polypeptide: 3-deoxy-manno-octulosonate cytidylyltransferase (257 aa).

This sequence belongs to the KdsB family.

It localises to the cytoplasm. It carries out the reaction 3-deoxy-alpha-D-manno-oct-2-ulosonate + CTP = CMP-3-deoxy-beta-D-manno-octulosonate + diphosphate. It functions in the pathway nucleotide-sugar biosynthesis; CMP-3-deoxy-D-manno-octulosonate biosynthesis; CMP-3-deoxy-D-manno-octulosonate from 3-deoxy-D-manno-octulosonate and CTP: step 1/1. It participates in bacterial outer membrane biogenesis; lipopolysaccharide biosynthesis. In terms of biological role, activates KDO (a required 8-carbon sugar) for incorporation into bacterial lipopolysaccharide in Gram-negative bacteria. The protein is 3-deoxy-manno-octulosonate cytidylyltransferase of Xylella fastidiosa (strain 9a5c).